Reading from the N-terminus, the 180-residue chain is Ribulose bisphosphate carboxylase small subunit, chloroplastic 3 (180 aa).

Residues methionine 1 to lysine 56 constitute a chloroplast transit peptide.

It belongs to the RuBisCO small chain family. Heterohexadecamer of 8 large and 8 small subunits.

The protein localises to the plastid. It is found in the chloroplast. In terms of biological role, ruBisCO catalyzes two reactions: the carboxylation of D-ribulose 1,5-bisphosphate, the primary event in carbon dioxide fixation, as well as the oxidative fragmentation of the pentose substrate. Both reactions occur simultaneously and in competition at the same active site. Although the small subunit is not catalytic it is essential for maximal activity. Binds to abscisic acid (ABA); only half of the possible binding sites are occupied in the crystal; and there are indications this is a low affinity site. The sequence is that of Ribulose bisphosphate carboxylase small subunit, chloroplastic 3 (RBCS.3A) from Pisum sativum (Garden pea).